The sequence spans 55 residues: MPQLNPAPWFTILVFSWMIFLAIIPTKVMGHTSPNDSSPLSTEKHKTESWDWPWQ.

Residues Leu-4 to Ile-24 form a helical membrane-spanning segment. Residues Thr-32–Ser-41 are compositionally biased toward polar residues. The tract at residues Thr-32–Gln-55 is disordered.

It belongs to the ATPase protein 8 family. Component of the ATP synthase complex composed at least of ATP5F1A/subunit alpha, ATP5F1B/subunit beta, ATP5MC1/subunit c (homooctomer), MT-ATP6/subunit a, MT-ATP8/subunit 8, ATP5ME/subunit e, ATP5MF/subunit f, ATP5MG/subunit g, ATP5MK/subunit k, ATP5MJ/subunit j, ATP5F1C/subunit gamma, ATP5F1D/subunit delta, ATP5F1E/subunit epsilon, ATP5PF/subunit F6, ATP5PB/subunit b, ATP5PD/subunit d, ATP5PO/subunit OSCP. ATP synthase complex consists of a soluble F(1) head domain (subunits alpha(3) and beta(3)) - the catalytic core - and a membrane F(0) domain - the membrane proton channel (subunits c, a, 8, e, f, g, k and j). These two domains are linked by a central stalk (subunits gamma, delta, and epsilon) rotating inside the F1 region and a stationary peripheral stalk (subunits F6, b, d, and OSCP).

The protein resides in the mitochondrion membrane. Functionally, subunit 8, of the mitochondrial membrane ATP synthase complex (F(1)F(0) ATP synthase or Complex V) that produces ATP from ADP in the presence of a proton gradient across the membrane which is generated by electron transport complexes of the respiratory chain. ATP synthase complex consist of a soluble F(1) head domain - the catalytic core - and a membrane F(1) domain - the membrane proton channel. These two domains are linked by a central stalk rotating inside the F(1) region and a stationary peripheral stalk. During catalysis, ATP synthesis in the catalytic domain of F(1) is coupled via a rotary mechanism of the central stalk subunits to proton translocation. In vivo, can only synthesize ATP although its ATP hydrolase activity can be activated artificially in vitro. Part of the complex F(0) domain. The chain is ATP synthase F(0) complex subunit 8 from Formosania lacustris (Oriental stream loach).